The sequence spans 427 residues: Phosphatidylglycerol--prolipoprotein diacylglyceryl transferase (427 aa).

A run of 4 helical transmembrane segments spans residues 21–41, 53–73, 96–116, and 122–142; these read VPIR…LLIG, GVIY…GRLY, IWDG…GAWI, and GIPL…AQAI. Residue arginine 144 participates in a 1,2-diacyl-sn-glycero-3-phospho-(1'-sn-glycerol) binding. 2 helical membrane-spanning segments follow: residues 189–209 and 256–276; these read VALV…LIFV and INSF…MAAP. Positions 280–427 are disordered; it reads EDPESLRGNQ…ARLRERLSGR (148 aa). Positions 299 to 330 are enriched in low complexity; the sequence is EPATVAATTEAATEGVAAPADGAEAAGADATA. A compositionally biased stretch (basic and acidic residues) spans 332–346; sequence RPEESAEPDVEKPES. A compositionally biased stretch (acidic residues) spans 347-404; the sequence is EETEAAEEASEPEAEEPEAPEAEEPEEPETEEPEADSGEEPEEESGEAPEQLVAEEPE. The segment covering 411–427 has biased composition (basic and acidic residues); it reads ETKRRWGARLRERLSGR.

The protein belongs to the Lgt family.

It is found in the cell membrane. The catalysed reaction is L-cysteinyl-[prolipoprotein] + a 1,2-diacyl-sn-glycero-3-phospho-(1'-sn-glycerol) = an S-1,2-diacyl-sn-glyceryl-L-cysteinyl-[prolipoprotein] + sn-glycerol 1-phosphate + H(+). Its pathway is protein modification; lipoprotein biosynthesis (diacylglyceryl transfer). In terms of biological role, catalyzes the transfer of the diacylglyceryl group from phosphatidylglycerol to the sulfhydryl group of the N-terminal cysteine of a prolipoprotein, the first step in the formation of mature lipoproteins. This chain is Phosphatidylglycerol--prolipoprotein diacylglyceryl transferase, found in Mycolicibacterium paratuberculosis (strain ATCC BAA-968 / K-10) (Mycobacterium paratuberculosis).